The following is an 887-amino-acid chain: Pyruvate, phosphate dikinase 2 (887 aa).

Thr467 bears the Phosphothreonine; by PDRP1 mark. His469 (tele-phosphohistidine intermediate) is an active-site residue. Positions 575, 632, 761, 782, 783, 784, and 785 each coordinate substrate. A Mg(2+)-binding site is contributed by Glu761. Asp785 serves as a coordination point for Mg(2+). Catalysis depends on Cys847, which acts as the Proton donor.

This sequence belongs to the PEP-utilizing enzyme family. The cofactor is Mg(2+).

The protein resides in the cytoplasm. It catalyses the reaction pyruvate + phosphate + ATP = phosphoenolpyruvate + AMP + diphosphate + H(+). Formation of phosphoenolpyruvate. The protein is Pyruvate, phosphate dikinase 2 (PPDK2) of Oryza sativa subsp. japonica (Rice).